Consider the following 247-residue polypeptide: Cementoblastoma-derived protein 1 (247 aa).

Residues 1–28 show a composition bias toward polar residues; sequence MGTSSTDSQQAGHRRCSTSNTSAENLTC. 2 disordered regions span residues 1 to 52 and 147 to 183; these read MGTS…AGQP and EENS…EKVK.

Post-translationally, phosphorylated. In terms of processing, N-glycosylated. In terms of tissue distribution, expressed by cementoblasts, a subpopulation of periodontal ligament cells and cells located around vessels in periodontium (at protein level).

It localises to the cytoplasm. It is found in the nucleus. In terms of biological role, may play a role in development of the periodontium which surrounds and supports the teeth by promoting the differentiation of multi-potent cells from the periodontal ligament into cementoblasts to form the cementum. Binds hydroxyapatite and may promote the biomineralization of the cementum. Also promotes cell proliferation. This chain is Cementoblastoma-derived protein 1, found in Homo sapiens (Human).